Consider the following 288-residue polypeptide: Cell division protein DivIB (288 aa).

The Cytoplasmic portion of the chain corresponds to 1 to 25 (MEKVIDITERVPAMKKRRRRRTNFK). A helical transmembrane segment spans residues 26–46 (FLALVTIFLFIIIILLYFQLP). The Extracellular portion of the chain corresponds to 47–288 (YSDIKKIDIK…LEEQNEEEPE (242 aa)). Residues 48–116 (SDIKKIDIKG…NEVQITVEEW (69 aa)) enclose the POTRA domain. Residues 253 to 263 (LIKENTEKTEE) show a composition bias toward basic and acidic residues. The tract at residues 253–288 (LIKENTEKTEEPAEETENADTEEGGQLEEQNEEEPE) is disordered. Residues 264–288 (PAEETENADTEEGGQLEEQNEEEPE) show a composition bias toward acidic residues.

Belongs to the FtsQ/DivIB family. DivIB subfamily.

It is found in the cell membrane. In terms of biological role, cell division protein that may be involved in stabilizing or promoting the assembly of the division complex. In Solibacillus silvestris (strain StLB046) (Bacillus silvestris), this protein is Cell division protein DivIB.